The chain runs to 438 residues: Protein maelstrom 2 (438 aa).

The HMG box DNA-binding region spans 2–69 (APKKRNGFMT…LERTAKKERL (68 aa)). A disordered region spans residues 374–438 (KEMGSRDLSP…NMGAGKKIAR (65 aa)). Polar residues predominate over residues 381 to 391 (LSPSSSHQSVS).

This sequence belongs to the maelstrom family.

The protein resides in the cytoplasm. The protein localises to the nucleus. Involved both in the piRNA and miRNA metabolic processes. As a component of the meiotic nuage, plays a central role during oogenesis by repressing transposable elements and preventing their mobilization, which is essential for the germline integrity. Repression of transposable elements is mediated via the piRNA metabolic process, which mediates the repression of transposable elements during meiosis by forming complexes composed of piRNAs and Piwi proteins and governs the repression of transposons. As a nuclear component, it is required for proper differentiation in the germline stem cell (GSC) lineage by repressing microRNA-7 (miR-7), thereby acting as an indirect regulator of bag-of-marbles (Bam). Acts by binding to the promoter of miR-7 gene and repressing its expression; miR-7 repression alleviates the Bam repression by miR-7, thereby allowing differentiation in the germline stem cell (GSC) lineage. The polypeptide is Protein maelstrom 2 (mael2) (Drosophila persimilis (Fruit fly)).